A 962-amino-acid polypeptide reads, in one-letter code: Oncostatin-M-specific receptor subunit beta (962 aa).

Residues 1–28 form the signal peptide; sequence MAFSVVLHQVTFLLAVLSLRTSQSKVLG. Residues 29 to 738 lie on the Extracellular side of the membrane; that stretch reads EPLQLTPEIH…VTTPDVRSHM (710 aa). Asn219 is a glycosylation site (N-linked (GlcNAc...) asparagine). Fibronectin type-III domains follow at residues 237–332, 333–426, 428–527, 528–621, and 623–734; these read EPKN…VHPK, APHD…TPEA, PSEA…SGHE, EVHE…TQEL, and PSVN…TPDV. Cys243 and Cys253 are oxidised to a cystine. Asn324 is a glycosylation site (N-linked (GlcNAc...) asparagine). The short motif at 413–417 is the WSXWS motif element; that stretch reads WSDWM. 3 N-linked (GlcNAc...) asparagine glycosylation sites follow: Asn492, Asn578, and Asn723. The helical transmembrane segment at 739-759 threads the bilayer; that stretch reads LLQIILPMTLGVFLSIIVCYW. Residues 760-962 are Cytoplasmic-facing; it reads KSQWVKEKCY…ASLKENNLTS (203 aa). The short motif at 768 to 776 is the Box 1 motif element; sequence CYPDIPNPY. A disordered region spans residues 818-840; it reads VGSGKLHTEDVPTKPPLVPTEKD.

This sequence belongs to the type I cytokine receptor family. Type 2 subfamily. In terms of assembly, heterodimer composed of OSMR and IL6ST (type II OSM receptor). Heterodimer with IL31RA to form the IL31 receptor. As to expression, widely expressed. Expressed at high levels in the liver, skin and spleen. In the liver it is expressed exclusively in the oval cells.

It localises to the membrane. In terms of biological role, associates with IL31RA to form the IL31 receptor. Binds IL31 and activates STAT1, STAT3 and STAT5. Capable of transducing OSM-specific signaling events. The OSM/OSM-R system is pivotal in the differentiation of oval cells into hepatocytes, thereby promoting liver regeneration. The polypeptide is Oncostatin-M-specific receptor subunit beta (Osmr) (Rattus norvegicus (Rat)).